The sequence spans 415 residues: Serine hydroxymethyltransferase (415 aa).

(6S)-5,6,7,8-tetrahydrofolate contacts are provided by residues Leu117 and 121–123; that span reads GHL. Lys226 carries the N6-(pyridoxal phosphate)lysine modification. A (6S)-5,6,7,8-tetrahydrofolate-binding site is contributed by 349 to 351; it reads SPF.

This sequence belongs to the SHMT family. As to quaternary structure, homodimer. It depends on pyridoxal 5'-phosphate as a cofactor.

Its subcellular location is the cytoplasm. It carries out the reaction (6R)-5,10-methylene-5,6,7,8-tetrahydrofolate + glycine + H2O = (6S)-5,6,7,8-tetrahydrofolate + L-serine. Its pathway is one-carbon metabolism; tetrahydrofolate interconversion. It functions in the pathway amino-acid biosynthesis; glycine biosynthesis; glycine from L-serine: step 1/1. Catalyzes the reversible interconversion of serine and glycine with tetrahydrofolate (THF) serving as the one-carbon carrier. This reaction serves as the major source of one-carbon groups required for the biosynthesis of purines, thymidylate, methionine, and other important biomolecules. Also exhibits THF-independent aldolase activity toward beta-hydroxyamino acids, producing glycine and aldehydes, via a retro-aldol mechanism. The chain is Serine hydroxymethyltransferase from Geobacter sp. (strain M21).